The chain runs to 692 residues: Elongation factor G (692 aa).

In terms of domain architecture, tr-type G spans 8–282; the sequence is EKTRNIGIMA…AIVDYLPAPT (275 aa). Residues 17-24, 81-85, and 135-138 each bind GTP; these read AHIDAGKT, DTPGH, and NKMD.

It belongs to the TRAFAC class translation factor GTPase superfamily. Classic translation factor GTPase family. EF-G/EF-2 subfamily.

Its subcellular location is the cytoplasm. Its function is as follows. Catalyzes the GTP-dependent ribosomal translocation step during translation elongation. During this step, the ribosome changes from the pre-translocational (PRE) to the post-translocational (POST) state as the newly formed A-site-bound peptidyl-tRNA and P-site-bound deacylated tRNA move to the P and E sites, respectively. Catalyzes the coordinated movement of the two tRNA molecules, the mRNA and conformational changes in the ribosome. The sequence is that of Elongation factor G from Pelotomaculum thermopropionicum (strain DSM 13744 / JCM 10971 / SI).